Reading from the N-terminus, the 151-residue chain is 3-hydroxyacyl-[acyl-carrier-protein] dehydratase FabZ (151 aa).

His-49 is a catalytic residue.

This sequence belongs to the thioester dehydratase family. FabZ subfamily.

The protein resides in the cytoplasm. It catalyses the reaction a (3R)-hydroxyacyl-[ACP] = a (2E)-enoyl-[ACP] + H2O. Involved in unsaturated fatty acids biosynthesis. Catalyzes the dehydration of short chain beta-hydroxyacyl-ACPs and long chain saturated and unsaturated beta-hydroxyacyl-ACPs. In Bordetella petrii (strain ATCC BAA-461 / DSM 12804 / CCUG 43448), this protein is 3-hydroxyacyl-[acyl-carrier-protein] dehydratase FabZ.